Here is a 639-residue protein sequence, read N- to C-terminus: Protein artemis (639 aa).

Disordered stretches follow at residues 450–496, 515–570, and 590–617; these read MDCT…LTSS, SELE…SQVD, and EAAE…VPQP. Acidic residues predominate over residues 454-466; sequence ESNDDDDDEDDAA. Positions 518 to 537 are enriched in polar residues; that stretch reads ENSQNTQTLSTENTASQSPE. A compositionally biased stretch (low complexity) spans 548–560; the sequence is VHMSSSQSTHISD.

This sequence belongs to the DNA repair metallo-beta-lactamase (DRMBL) family.

It localises to the nucleus. May have a role in the processing of DNA double strand breaks (DSBs) prior to their repair by the non homologous end joining (NHEJ) pathway. Probably exhibits both exonuclease and endonuclease activity. The sequence is that of Protein artemis (dclre1c) from Danio rerio (Zebrafish).